We begin with the raw amino-acid sequence, 201 residues long: Recombination protein RecR (201 aa).

The C4-type zinc finger occupies 57 to 72 (CADCRTFTEQEVCNIC). The region spanning 81–176 (GQICVVESPA…EASRIAHGVP (96 aa)) is the Toprim domain.

Belongs to the RecR family.

In terms of biological role, may play a role in DNA repair. It seems to be involved in an RecBC-independent recombinational process of DNA repair. It may act with RecF and RecO. In Escherichia coli O17:K52:H18 (strain UMN026 / ExPEC), this protein is Recombination protein RecR.